The sequence spans 431 residues: UDP-N-acetylglucosamine 1-carboxyvinyltransferase (431 aa).

22-23 (KN) serves as a coordination point for phosphoenolpyruvate. A UDP-N-acetyl-alpha-D-glucosamine-binding site is contributed by Arg102. Cys126 (proton donor) is an active-site residue. Cys126 carries the post-translational modification 2-(S-cysteinyl)pyruvic acid O-phosphothioketal. UDP-N-acetyl-alpha-D-glucosamine-binding positions include 131–135 (RPVDL), Asp316, and Ile338.

Belongs to the EPSP synthase family. MurA subfamily.

The protein resides in the cytoplasm. It carries out the reaction phosphoenolpyruvate + UDP-N-acetyl-alpha-D-glucosamine = UDP-N-acetyl-3-O-(1-carboxyvinyl)-alpha-D-glucosamine + phosphate. The protein operates within cell wall biogenesis; peptidoglycan biosynthesis. Functionally, cell wall formation. Adds enolpyruvyl to UDP-N-acetylglucosamine. This Beijerinckia indica subsp. indica (strain ATCC 9039 / DSM 1715 / NCIMB 8712) protein is UDP-N-acetylglucosamine 1-carboxyvinyltransferase.